A 368-amino-acid polypeptide reads, in one-letter code: WAT1-related protein At5g40240 (368 aa).

Transmembrane regions (helical) follow at residues 18–38 (VVPF…NTLF), 50–70 (VFVF…SVIF), 82–102 (PLFF…IAGC), 111–131 (TLAS…AVIF), 142–162 (ATQA…VVVL), 194–214 (WIIG…WYIL), 226–246 (ITVV…VCLF), 260–280 (ISLA…ALTH), 292–312 (ISLF…IFLG), and 315–335 (LHLG…TVIW). EamA domains lie at 33 to 161 (GSNT…LVVV) and 208 to 334 (ISVW…YTVI).

This sequence belongs to the drug/metabolite transporter (DMT) superfamily. Plant drug/metabolite exporter (P-DME) (TC 2.A.7.4) family.

The protein resides in the membrane. The protein is WAT1-related protein At5g40240 of Arabidopsis thaliana (Mouse-ear cress).